The following is a 332-amino-acid chain: Serpentine receptor class gamma-3 (332 aa).

7 consecutive transmembrane segments (helical) span residues F23–S43, L72–V92, I101–A121, I144–D164, W184–V204, A231–F251, and Y263–V283.

Belongs to the nematode receptor-like protein srg family.

It localises to the membrane. The protein is Serpentine receptor class gamma-3 (srg-3) of Caenorhabditis elegans.